The following is a 440-amino-acid chain: Xylose isomerase (440 aa).

Residues His100 and Asp103 contribute to the active site. Glu231, Glu267, His270, Asp295, Asp306, Asp308, and Asp338 together coordinate Mg(2+).

This sequence belongs to the xylose isomerase family. As to quaternary structure, homotetramer. Mg(2+) is required as a cofactor.

Its subcellular location is the cytoplasm. The catalysed reaction is alpha-D-xylose = alpha-D-xylulofuranose. The sequence is that of Xylose isomerase from Burkholderia ambifaria (strain MC40-6).